A 265-amino-acid chain; its full sequence is MAQLRADDLSFIFGLLGNIVSFMVFLAPVPTFYKIYKRKSSEGYQAIPYMVALFSAGLLLYYAYLRKNAYLIVSINGFGCAIELTYISLFLFYAPRKSKIFTGWLMLLELGALGMVMPITYLLAEGSHRVMIVGWICAAINVAVFAAPLSIMRQVIKTKSVEFMPFTLSLFLTLCATMWFFYGFFKKDFYIAFPNILGFLFGIVQMLLYFVYKDSKRIDDEKSDPVREATKSKEGVEIIINIEDDNSDNALQSMEKDFSRLRTSK.

The Extracellular portion of the chain corresponds to 1–8; it reads MAQLRADD. A helical transmembrane segment spans residues 9–29; that stretch reads LSFIFGLLGNIVSFMVFLAPV. The region spanning 11–97 is the MtN3/slv 1 domain; the sequence is FIFGLLGNIV…SLFLFYAPRK (87 aa). Over 30–44 the chain is Cytoplasmic; it reads PTFYKIYKRKSSEGY. Residues 45 to 65 traverse the membrane as a helical segment; it reads QAIPYMVALFSAGLLLYYAYL. The Extracellular portion of the chain corresponds to 66-71; that stretch reads RKNAYL. A helical transmembrane segment spans residues 72–92; that stretch reads IVSINGFGCAIELTYISLFLF. Topologically, residues 93–103 are cytoplasmic; it reads YAPRKSKIFTG. Residues 104 to 124 traverse the membrane as a helical segment; the sequence is WLMLLELGALGMVMPITYLLA. Topologically, residues 125-130 are extracellular; the sequence is EGSHRV. The chain crosses the membrane as a helical span at residues 131–151; the sequence is MIVGWICAAINVAVFAAPLSI. Positions 132–216 constitute a MtN3/slv 2 domain; the sequence is IVGWICAAIN…LLYFVYKDSK (85 aa). Residues 152–164 lie on the Cytoplasmic side of the membrane; the sequence is MRQVIKTKSVEFM. Residues 165–185 traverse the membrane as a helical segment; the sequence is PFTLSLFLTLCATMWFFYGFF. Topologically, residues 186–190 are extracellular; it reads KKDFY. A helical membrane pass occupies residues 191–211; sequence IAFPNILGFLFGIVQMLLYFV. Over 212–265 the chain is Cytoplasmic; the sequence is YKDSKRIDDEKSDPVREATKSKEGVEIIINIEDDNSDNALQSMEKDFSRLRTSK.

This sequence belongs to the SWEET sugar transporter family. In terms of assembly, forms homooligomers and/or heterooligomers. Highly expressed in nectary tissue and weakly in the stamen, especially in stomium cells and in the upper part of the filaments.

The protein localises to the cell membrane. In terms of biological role, mediates both low-affinity uptake and efflux of sugar across the plasma membrane. Promotes the formation of phloem bundles in mid-veins. Probably involved in the development of stomium cells that control anther opening time. Required for pollen viability. This Petunia hybrida (Petunia) protein is Bidirectional sugar transporter NEC1 (NEC1).